We begin with the raw amino-acid sequence, 215 residues long: Glutathione S-transferase F9 (215 aa).

A GST N-terminal domain is found at 2-81 (VLKVYGPHFA…YVAEKYRSQG (80 aa)). 11–12 (AS) contacts glutathione. Phosphoserine is present on Ser12. Methionine sulfoxide is present on Met35. Glutathione contacts are provided by residues 39–40 (HK), 52–53 (TV), and 65–66 (ES). Residues 88–215 (TVEDRGQVEQ…ETVAKYSFPA (128 aa)) enclose the GST C-terminal domain. A methionine sulfoxide mark is found at Met118, Met123, and Met184.

The protein belongs to the GST superfamily. Phi family. Oxidated at Met-35, Met-118, Met-123 and Met-184 in oxidative stress conditions (e.g. hydrogen peroxide H(2)O(2)).

It localises to the cytoplasm. It is found in the cytosol. It catalyses the reaction RX + glutathione = an S-substituted glutathione + a halide anion + H(+). Redox-regulated enzyme; in oxidative stress conditions methionine oxidation ensure a thermodynamic and structural compensatory mechanism to guarantee H(2)O(2) peroxidase activity despite transferase activity inhibition. In vitro, possesses glutathione S-transferase activity toward 1-chloro-2,4-dinitrobenzene (CDNB) and benzyl isothiocyanate (BITC), and glutathione peroxidase activity toward cumene hydroperoxide and linoleic acid-13-hydroperoxide. May be involved in the conjugation of reduced glutathione to a wide number of exogenous and endogenous hydrophobic electrophiles and have a detoxification role against certain herbicides. In Arabidopsis thaliana (Mouse-ear cress), this protein is Glutathione S-transferase F9.